A 156-amino-acid chain; its full sequence is Persephin (156 aa).

An N-terminal signal peptide occupies residues 1-21 (MAAGRLRILFLLLLSLHLGLG). Cystine bridges form between C66–C124, C93–C152, and C97–C154.

It belongs to the TGF-beta family. GDNF subfamily. Homodimer; disulfide-linked. Interacts with GFRA4 coreceptor and RET: forms a 2:2:2 ternary complex composed of PSPN ligand, GFRA4 and RET receptor. Expressed at low levels in substantia nigra. Cochlea.

It localises to the secreted. In terms of biological role, growth factor that exhibits neurotrophic activity on mesencephalic dopaminergic and motor neurons. Acts by binding to its coreceptor, GFRA4, leading to autophosphorylation and activation of the RET receptor. This Rattus norvegicus (Rat) protein is Persephin.